The chain runs to 140 residues: Peptide methionine sulfoxide reductase MsrB (140 aa).

In terms of domain architecture, MsrB spans 10 to 132; that stretch reads EEDWKSVLTP…NSVSLGFTKE (123 aa). Zn(2+) contacts are provided by Cys49, Cys52, Cys98, and Cys101. The active-site Nucleophile is Cys121.

This sequence belongs to the MsrB Met sulfoxide reductase family. Zn(2+) is required as a cofactor.

The enzyme catalyses L-methionyl-[protein] + [thioredoxin]-disulfide + H2O = L-methionyl-(R)-S-oxide-[protein] + [thioredoxin]-dithiol. This is Peptide methionine sulfoxide reductase MsrB from Methanosarcina mazei (strain ATCC BAA-159 / DSM 3647 / Goe1 / Go1 / JCM 11833 / OCM 88) (Methanosarcina frisia).